Here is a 471-residue protein sequence, read N- to C-terminus: Argininosuccinate lyase (471 aa).

It belongs to the lyase 1 family. Argininosuccinate lyase subfamily.

It is found in the cytoplasm. The catalysed reaction is 2-(N(omega)-L-arginino)succinate = fumarate + L-arginine. It participates in amino-acid biosynthesis; L-arginine biosynthesis; L-arginine from L-ornithine and carbamoyl phosphate: step 3/3. The sequence is that of Argininosuccinate lyase from Ehrlichia canis (strain Jake).